We begin with the raw amino-acid sequence, 498 residues long: tRNA-guanine(15) transglycosylase (498 aa).

Catalysis depends on Asp-85, which acts as the Nucleophile. Asp-120 contacts substrate. Residues Cys-275, Cys-277, and Cys-280 each contribute to the Zn(2+) site.

Belongs to the archaeosine tRNA-ribosyltransferase family. Requires Zn(2+) as cofactor.

The enzyme catalyses guanosine(15) in tRNA + 7-cyano-7-deazaguanine = 7-cyano-7-carbaguanosine(15) in tRNA + guanine. The protein operates within tRNA modification; archaeosine-tRNA biosynthesis. Its function is as follows. Exchanges the guanine residue with 7-cyano-7-deazaguanine (preQ0) at position 15 in the dihydrouridine loop (D-loop) of archaeal tRNAs. This Sulfolobus acidocaldarius (strain ATCC 33909 / DSM 639 / JCM 8929 / NBRC 15157 / NCIMB 11770) protein is tRNA-guanine(15) transglycosylase.